The primary structure comprises 215 residues: E3 ubiquitin-protein ligase NleG (215 aa).

Positions Cys-136–Val-189 are RING/U-box domain. The short motif at Thr-213–Ile-215 is the PDZ-binding motif element.

Belongs to the NleG E3 ligase family. As to quaternary structure, interacts with host GOPC (human protein). Two sizes of protein are detected upon expression in C.rodentium; only the smaller protein is secreted.

The protein localises to the secreted. It is found in the host cytoplasm. It catalyses the reaction S-ubiquitinyl-[E2 ubiquitin-conjugating enzyme]-L-cysteine + [acceptor protein]-L-lysine = [E2 ubiquitin-conjugating enzyme]-L-cysteine + N(6)-ubiquitinyl-[acceptor protein]-L-lysine.. Functionally, effector proteins function to alter host cell physiology and promote bacterial survival in host tissues. This protein is an E3 ubiquitin-protein ligase that probably interferes with the host's ubiquitination pathway and targets host proteins for proteasomal degradation. Can ubiquitinate ubiquitin, giving rise to polyubiquitin chains (in vitro). Does not complement an nleG8 deletion in C.rodentium. The protein is E3 ubiquitin-protein ligase NleG of Escherichia coli O157:H7.